Consider the following 493-residue polypeptide: Protein nucleotidyltransferase YdiU (493 aa).

The ATP site is built by G96, G98, R99, K119, D131, G132, R182, and R189. Residue D258 is the Proton acceptor of the active site. Residues N259 and D268 each contribute to the Mg(2+) site. D268 contributes to the ATP binding site. The tract at residues 471–493 (EKYTEFKNPPAPKERVSQTFCGT) is disordered.

It belongs to the SELO family. It depends on Mg(2+) as a cofactor. Requires Mn(2+) as cofactor.

The catalysed reaction is L-seryl-[protein] + ATP = 3-O-(5'-adenylyl)-L-seryl-[protein] + diphosphate. It catalyses the reaction L-threonyl-[protein] + ATP = 3-O-(5'-adenylyl)-L-threonyl-[protein] + diphosphate. It carries out the reaction L-tyrosyl-[protein] + ATP = O-(5'-adenylyl)-L-tyrosyl-[protein] + diphosphate. The enzyme catalyses L-histidyl-[protein] + UTP = N(tele)-(5'-uridylyl)-L-histidyl-[protein] + diphosphate. The catalysed reaction is L-seryl-[protein] + UTP = O-(5'-uridylyl)-L-seryl-[protein] + diphosphate. It catalyses the reaction L-tyrosyl-[protein] + UTP = O-(5'-uridylyl)-L-tyrosyl-[protein] + diphosphate. Its function is as follows. Nucleotidyltransferase involved in the post-translational modification of proteins. It can catalyze the addition of adenosine monophosphate (AMP) or uridine monophosphate (UMP) to a protein, resulting in modifications known as AMPylation and UMPylation. In Nitrosococcus oceani (strain ATCC 19707 / BCRC 17464 / JCM 30415 / NCIMB 11848 / C-107), this protein is Protein nucleotidyltransferase YdiU.